The chain runs to 481 residues: Beta-1,3-glucan-binding protein (481 aa).

Residues 1–18 (RCARVCAVLFLFIQISYG) form the signal peptide. In terms of domain architecture, CBM39 spans 20 to 120 (YQVPQVTVQA…LSFTVSALED (101 aa)). Asn-110 carries an N-linked (GlcNAc...) asparagine glycan. A GH16 domain is found at 124–481 (TGTGTDPVPT…LVDYVKVVAL (358 aa)).

This sequence belongs to the insect beta-1,3-glucan binding protein family.

It localises to the secreted. Involved in the recognition of invading microorganisms. Binds specifically to beta-1,3-glucan and activates the phenoloxidase cascade. The protein is Beta-1,3-glucan-binding protein of Hyphantria cunea (Fall webworm moth).